The following is a 1311-amino-acid chain: Zinc finger protein 521 (1311 aa).

The C2H2-type 1; degenerate zinc-finger motif lies at histidine 47–isoleucine 67. The disordered stretch occupies residues aspartate 81–glycine 108. The segment covering serine 83–glycine 102 has biased composition (low complexity). 7 consecutive C2H2-type zinc fingers follow at residues tyrosine 118–histidine 140, phenylalanine 146–histidine 168, tyrosine 174–histidine 196, tyrosine 202–histidine 224, glutamine 246–histidine 269, leucine 281–histidine 304, and asparagine 310–histidine 332. Residues threonine 357–serine 398 form a disordered region. 2 stretches are compositionally biased toward polar residues: residues proline 359 to methionine 370 and alanine 387 to serine 398. Residues tyrosine 405 to histidine 429 form a C2H2-type 9; degenerate zinc finger. 3 consecutive C2H2-type zinc fingers follow at residues histidine 437–histidine 460, tyrosine 477–histidine 500, and phenylalanine 513–histidine 536. Serine 546 carries the phosphoserine modification. Residues tyrosine 560 to histidine 585 form a C2H2-type 13; atypical zinc finger. A phosphoserine mark is found at serine 605 and serine 608. C2H2-type zinc fingers lie at residues tyrosine 634–histidine 656, leucine 664–histidine 686, tyrosine 694–histidine 717, phenylalanine 722–histidine 745, tyrosine 752–histidine 775, histidine 783–histidine 805, and tyrosine 809–histidine 832. Residues threonine 863–glutamate 883 form a disordered region. A C2H2-type 21; degenerate zinc finger spans residues tyrosine 886–aspartate 908. C2H2-type zinc fingers lie at residues tyrosine 930–histidine 952, tyrosine 959–histidine 981, and phenylalanine 1020–histidine 1042. Residues tyrosine 1065–leucine 1083 form a C2H2-type 25; degenerate zinc finger. The span at proline 1105–glycine 1119 shows a compositional bias: low complexity. The interval proline 1105 to leucine 1136 is disordered. 5 consecutive C2H2-type zinc fingers follow at residues threonine 1138–histidine 1161, tyrosine 1195–histidine 1217, histidine 1225–histidine 1247, phenylalanine 1256–histidine 1279, and tyrosine 1286–histidine 1309. A Glycyl lysine isopeptide (Lys-Gly) (interchain with G-Cter in SUMO2) cross-link involves residue lysine 1146.

The protein belongs to the krueppel C2H2-type zinc-finger protein family. Interacts with EBF1. Interacts with SMAD1 and SMAD4. As to expression, widely expressed. Expressed in all B-cell stages.

It localises to the nucleus. Transcription factor that can both act as an activator or a repressor depending on the context. Involved in BMP signaling and in the regulation of the immature compartment of the hematopoietic system. Associates with SMADs in response to BMP2 leading to activate transcription of BMP target genes. Acts as a transcriptional repressor via its interaction with EBF1, a transcription factor involved specification of B-cell lineage; this interaction preventing EBF1 to bind DNA and activate target genes. The sequence is that of Zinc finger protein 521 (Znf521) from Mus musculus (Mouse).